Here is a 332-residue protein sequence, read N- to C-terminus: Alpha-N-acetylgalactosaminide alpha-2,6-sialyltransferase 6 (332 aa).

Residues 1–26 form a disordered region; that stretch reads MACPRPLSQCDHTPLPGPPAGHWPLP. Residues 1 to 42 are Cytoplasmic-facing; the sequence is MACPRPLSQCDHTPLPGPPAGHWPLPLSRRRREMKSNKEQRS. Residues 43–63 form a helical; Signal-anchor for type II membrane protein membrane-spanning segment; the sequence is AVFVILFALITILILYSSSSA. Residues 64–332 are Lumenal-facing; it reads NEVFHYGSLR…GITFSHPSWT (269 aa). Residue N97 is glycosylated (N-linked (GlcNAc...) asparagine). A disulfide bond links C107 and C255.

The protein belongs to the glycosyltransferase 29 family.

It is found in the golgi apparatus membrane. It carries out the reaction a ganglioside GM1b (d18:1(4E)) + CMP-N-acetyl-beta-neuraminate = a ganglioside GD1alpha (d18:1(4E)) + CMP + H(+). The catalysed reaction is N-acetyl-alpha-neuraminosyl-(2-&gt;3)-beta-D-galactosyl-(1-&gt;3)-N-acetyl-beta-D-glucosaminyl-(1-&gt;3)-beta-D-galactosyl-(1-&gt;4)-beta-D-glucosyl-(1&lt;-&gt;1')-N-acyl-sphing-4-enine + CMP-N-acetyl-beta-neuraminate = N-acetyl-alpha-neuraminosyl-(2-&gt;3)-beta-D-galactosyl-(1-&gt;3)-[N-acetyl-alpha-neuraminosyl-(2-&gt;6)]-N-acetyl-beta-D-glucosaminyl-(1-&gt;3)-beta-D-galactosyl-(1-&gt;4)-beta-D-glucosyl-(1&lt;-&gt;1')-N-acyl-sphing-4-enine + CMP + H(+). The enzyme catalyses a globoside MSGG + CMP-N-acetyl-beta-neuraminate = a globoside DSGG + CMP + H(+). It catalyses the reaction a ganglioside GD1a (d18:1(4E)) + CMP-N-acetyl-beta-neuraminate = a ganglioside GT1aalpha (d18:1(4E)) + CMP + H(+). It carries out the reaction a ganglioside GT1b (d18:1(4E)) + CMP-N-acetyl-beta-neuraminate = a ganglioside GQ1balpha (d18:1(4E)) + CMP + H(+). The catalysed reaction is 3-O-[alpha-Neu5Ac-(2-&gt;3)-beta-D-Gal-(1-&gt;3)-alpha-D-GalNAc]-L-Ser-[protein] + CMP-N-acetyl-beta-neuraminate = a 3-O-{alpha-Neu5Ac-(2-&gt;3)-beta-D-Gal-(1-&gt;3)-[alpha-Neu5Ac-(2-&gt;6)]-alpha-D-GalNAc}-L-seryl-[protein] + CMP + H(+). The enzyme catalyses 3-O-[alpha-Neu5Ac-(2-&gt;3)-beta-D-Gal-(1-&gt;3)-alpha-D-GalNAc]-L-Thr-[protein] + CMP-N-acetyl-beta-neuraminate = a 3-O-{alpha-Neu5Ac-(2-&gt;3)-beta-D-Gal-(1-&gt;3)-[alpha-Neu5Ac-(2-&gt;6)]-alpha-D-GalNAc}-L-threonyl-[protein] + CMP + H(+). In terms of biological role, transfers the sialyl group (N-acetyl-alpha-neuraminyl or NeuAc) from CMP-NeuAc onto glycoproteins and glycolipids, forming an alpha-2,6-linkage. Produces branched type disialyl structures by transfer of a sialyl group onto the GalNAc or GlcNAc residue inside backbone core chains having a terminal sialic acid with an alpha-2,3-linkage on Gal. ST6GalNAcVI prefers glycolipids to glycoproteins, predominantly catalyzing the biosynthesis of ganglioside GD1alpha from GM1b. Besides GMb1, MSGG and other glycolipids, it shows activity towards sialyl Lc4Cer generating disialyl Lc4Cer, which can lead to the synthesis of disialyl Lewis a (Le(a)), suggested to be a cancer-associated antigen. Also has activity toward GD1a and GT1b, and can generate DSGG (disialylgalactosylgloboside) from MSGG (monosialylgalactosylgloboside). The sequence is that of Alpha-N-acetylgalactosaminide alpha-2,6-sialyltransferase 6 (ST6GALNAC6) from Bos taurus (Bovine).